Reading from the N-terminus, the 247-residue chain is Nodulation protein H (247 aa).

The segment at 1–16 (MTHSTLPPRPFAILAM) is hydrophobic.

Functionally, required for the formation of sulfated nod factor. Proposed to transfer activated sulfate (PAPS) to a N-acetylglucosamine of the nod factor. In Rhizobium meliloti (Ensifer meliloti), this protein is Nodulation protein H (nodH).